The primary structure comprises 324 residues: tRNA U34 carboxymethyltransferase (324 aa).

Residues K91, W105, K110, G130, 152-154 (DPS), 181-182 (IE), M196, Y200, and R315 each bind carboxy-S-adenosyl-L-methionine.

The protein belongs to the class I-like SAM-binding methyltransferase superfamily. CmoB family. As to quaternary structure, homotetramer.

It carries out the reaction carboxy-S-adenosyl-L-methionine + 5-hydroxyuridine(34) in tRNA = 5-carboxymethoxyuridine(34) in tRNA + S-adenosyl-L-homocysteine + H(+). Catalyzes carboxymethyl transfer from carboxy-S-adenosyl-L-methionine (Cx-SAM) to 5-hydroxyuridine (ho5U) to form 5-carboxymethoxyuridine (cmo5U) at position 34 in tRNAs. The protein is tRNA U34 carboxymethyltransferase of Aliivibrio salmonicida (strain LFI1238) (Vibrio salmonicida (strain LFI1238)).